Consider the following 151-residue polypeptide: Ribosome maturation factor RimP (151 aa).

This sequence belongs to the RimP family.

It is found in the cytoplasm. In terms of biological role, required for maturation of 30S ribosomal subunits. The protein is Ribosome maturation factor RimP of Synechocystis sp. (strain ATCC 27184 / PCC 6803 / Kazusa).